The primary structure comprises 95 residues: Protein ECS1 (95 aa).

Positions 1 to 27 are cleaved as a signal peptide; it reads MASSIVSSMFLFLLLLLVFPHIDNVLG.

As to expression, expressed in leaves, flowers and stems, but not in roots.

It is found in the secreted. The protein resides in the cell wall. In terms of biological role, maybe involved in defense responses to X.campestris, but probably not a X.campestris pv. campestris race 750 (e.g. Xcc750) resistance gene; according to genetic data, linked to a locus influencing resistance to Xcc750. The polypeptide is Protein ECS1 (Arabidopsis thaliana (Mouse-ear cress)).